We begin with the raw amino-acid sequence, 554 residues long: L-ascorbate oxidase homolog (554 aa).

The N-terminal stretch at methionine 1–alanine 21 is a signal peptide. Plastocyanin-like domains are found at residues glutamate 22 to histidine 143 and serine 196 to arginine 296. N-linked (GlcNAc...) asparagine glycosylation is found at asparagine 31, asparagine 59, and asparagine 108. A disulfide bond links cysteine 101 and cysteine 540. Residues asparagine 332, asparagine 352, and asparagine 423 are each glycosylated (N-linked (GlcNAc...) asparagine). Residues aspartate 411 to leucine 521 enclose the Plastocyanin-like 3 domain.

The protein belongs to the multicopper oxidase family. Pollen.

It is found in the secreted. The protein localises to the extracellular space. Its function is as follows. Probable oxidoreductase that may be involved in pollen tube growth. This chain is L-ascorbate oxidase homolog, found in Nicotiana tabacum (Common tobacco).